The following is a 1026-amino-acid chain: Multidrug resistance protein MdtC (1026 aa).

12 consecutive transmembrane segments (helical) span residues 12-32 (VATLLLTLAIALCGVLGFRLL), 333-353 (EVEQSLVIAVALVILVVFLFL), 360-380 (AIPALAVPVSLIGTFAAMYLC), 387-407 (LSLMALTIATGFVVDDAIVVL), 431-451 (VGFTVLSMSLSLVAVFIPLLL), 463-483 (FAVTLSVAIMISLLISLTLTP), 528-548 (WVLLLLLGTIALNVWLYISIP), 853-873 (LLLILAAIITVYIVLGVLYES), 875-895 (VHPLTILSTLPSAGVGALLAL), 897-917 (WFGAPFSLVALIGIMLLIGIV), 953-973 (PIMMTTLAALFGALPLVLTSG), and 984-1004 (ITIVGGLVMSQILTLYTTPVV).

This sequence belongs to the resistance-nodulation-cell division (RND) (TC 2.A.6) family. MdtC subfamily. Part of a tripartite efflux system composed of MdtA, MdtB and MdtC. MdtC forms a heteromultimer with MdtB.

The protein localises to the cell inner membrane. The polypeptide is Multidrug resistance protein MdtC (Pectobacterium carotovorum subsp. carotovorum (strain PC1)).